The following is a 444-amino-acid chain: Tubulin beta chain (444 aa).

8 residues coordinate GTP: Gln-11, Glu-69, Ser-138, Gly-142, Thr-143, Gly-144, Asn-204, and Asn-226. Glu-69 contributes to the Mg(2+) binding site.

It belongs to the tubulin family. In terms of assembly, dimer of alpha and beta chains. A typical microtubule is a hollow water-filled tube with an outer diameter of 25 nm and an inner diameter of 15 nM. Alpha-beta heterodimers associate head-to-tail to form protofilaments running lengthwise along the microtubule wall with the beta-tubulin subunit facing the microtubule plus end conferring a structural polarity. Microtubules usually have 13 protofilaments but different protofilament numbers can be found in some organisms and specialized cells. The cofactor is Mg(2+).

It is found in the cytoplasm. The protein localises to the cytoskeleton. Tubulin is the major constituent of microtubules, a cylinder consisting of laterally associated linear protofilaments composed of alpha- and beta-tubulin heterodimers. Microtubules grow by the addition of GTP-tubulin dimers to the microtubule end, where a stabilizing cap forms. Below the cap, tubulin dimers are in GDP-bound state, owing to GTPase activity of alpha-tubulin. In Phytophthora cinnamomi (Cinnamon fungus), this protein is Tubulin beta chain.